A 585-amino-acid chain; its full sequence is Packaging protein UL32 (585 aa).

Positions 1–25 (MDRVESEEPMDGFESPVFSENTSSN) are disordered. C107, C110, H187, C193, C408, C411, H484, and C491 together coordinate Zn(2+). Zinc finger regions lie at residues 107–193 (CLVC…LHVC) and 408–491 (CMLC…DLLC).

This sequence belongs to the herpesviridae UL32 protein family.

It is found in the host cytoplasm. The protein localises to the host nucleus. Its function is as follows. Plays a role in efficient localization of neo-synthesized capsids to nuclear replication compartments, thereby controlling cleavage and packaging of virus genomic DNA. This chain is Packaging protein UL32 (26), found in Varicella-zoster virus (strain Dumas) (HHV-3).